Consider the following 559-residue polypeptide: Potassium-transporting ATPase potassium-binding subunit (559 aa).

The next 12 membrane-spanning stretches (helical) occupy residues 5-25, 63-83, 131-151, 173-193, 254-274, 282-302, 327-347, 356-376, 379-399, 416-436, 483-503, and 525-545; these read GFLLLASYLLVLLVLARPLGT, LLAILLFNALGGLALFALLML, VGLTVQNFLSAATGIAVVFAL, ITLWLLLPLSLLVALFFIQQG, VQMLAIFLIPAALCFAFGEVV, AILWAMTLIFILCVAVVMWAE, FGILASSLFAVITTAASCGAV, ALGGMVPMWLMQIGEVVFGGV, GLYGMLLFVMLAVFIAGLMVG, MIALAILVTPTLVLLGTALAM, LLLAFCMLVGRFAVIIPVMAI, and ALFIGLLIGTVLLVGALTFIP.

The protein belongs to the KdpA family. As to quaternary structure, the system is composed of three essential subunits: KdpA, KdpB and KdpC.

The protein resides in the cell inner membrane. Functionally, part of the high-affinity ATP-driven potassium transport (or Kdp) system, which catalyzes the hydrolysis of ATP coupled with the electrogenic transport of potassium into the cytoplasm. This subunit binds the periplasmic potassium ions and delivers the ions to the membrane domain of KdpB through an intramembrane tunnel. The sequence is that of Potassium-transporting ATPase potassium-binding subunit from Klebsiella pneumoniae (strain 342).